The following is a 695-amino-acid chain: Adhesion G protein-coupled receptor F4 (695 aa).

An N-terminal signal peptide occupies residues 1–21; the sequence is MKMKSQATMICCLVFFLSTEC. At 22–406 the chain is on the extracellular side; the sequence is SHYRSKIHLK…TDKVLDYITC (385 aa). 12 N-linked (GlcNAc...) asparagine glycosylation sites follow: asparagine 61, asparagine 169, asparagine 177, asparagine 209, asparagine 229, asparagine 250, asparagine 257, asparagine 263, asparagine 264, asparagine 286, asparagine 309, and asparagine 340. The GAIN-B domain occupies 249-397; it reads HNTSEKSLNF…SILMSSKSMT (149 aa). 2 disulfides stabilise this stretch: cysteine 349/cysteine 376 and cysteine 364/cysteine 378. The interval 349 to 397 is GPS; that stretch reads CVGWHSKKRRWDEKACQMMLDIRNEVKCRCNYTSVVMSFSILMSSKSMT. An N-linked (GlcNAc...) asparagine glycan is attached at asparagine 379. A helical membrane pass occupies residues 407–427; the sequence is IGLSVSILSLVLCLIIEATVW. At 428 to 440 the chain is on the cytoplasmic side; it reads SRVVVTEISYMRH. A helical membrane pass occupies residues 441-461; that stretch reads VCIVNIAVSLLTANVWFIIGS. At 462-485 the chain is on the extracellular side; it reads HFNIKAQDYNMCVAVTFFSHFFYL. The helical transmembrane segment at 486–506 threads the bilayer; it reads SLFFWMLFKALLIIYGILVIF. Residues 507-515 are Cytoplasmic-facing; it reads RRMMKSRMM. A helical transmembrane segment spans residues 516 to 536; the sequence is VIGFAIGYGCPLIIAVTTVAI. The Extracellular segment spans residues 537-561; the sequence is TEPEKGYMRPEACWLNWDNTKALLA. Residues 562–582 form a helical membrane-spanning segment; that stretch reads FAIPAFVIVAVNLIVVLVVAV. Residues 583–606 lie on the Cytoplasmic side of the membrane; the sequence is NTQRPSIGSSKSQDVVIIMRISKN. Residues 607–627 form a helical membrane-spanning segment; the sequence is VAILTPLLGLTWGFGIATLIE. At 628–634 the chain is on the extracellular side; sequence GTSLTFH. The helical transmembrane segment at 635–655 threads the bilayer; it reads IIFALLNAFQGFFILLFGTIM. Residues 656–695 are Cytoplasmic-facing; it reads DHKIRDALRMRMSSLKGKSRAAENASLGPTNGSKLMNRQG. Residues 674-695 form a disordered region; sequence SRAAENASLGPTNGSKLMNRQG. Residues 682–695 are compositionally biased toward polar residues; sequence LGPTNGSKLMNRQG.

It belongs to the G-protein coupled receptor 2 family. Adhesion G-protein coupled receptor (ADGR) subfamily.

Its subcellular location is the membrane. In terms of biological role, orphan receptor. In Homo sapiens (Human), this protein is Adhesion G protein-coupled receptor F4 (ADGRF4).